We begin with the raw amino-acid sequence, 351 residues long: Fe(3+) ions import ATP-binding protein FbpC (351 aa).

One can recognise an ABC transporter domain in the interval 7-241 (LTVKNLNKFF…PNHLETAKFM (235 aa)). Position 39-46 (39-46 (GASGCGKT)) interacts with ATP.

The protein belongs to the ABC transporter superfamily. Fe(3+) ion importer (TC 3.A.1.10) family. In terms of assembly, the complex is composed of two ATP-binding proteins (FbpC), two transmembrane proteins (FbpB) and a solute-binding protein (FbpA).

The protein localises to the cell inner membrane. The enzyme catalyses Fe(3+)(out) + ATP + H2O = Fe(3+)(in) + ADP + phosphate + H(+). Functionally, part of the ABC transporter complex FbpABC involved in Fe(3+) ions import. Responsible for energy coupling to the transport system. The sequence is that of Fe(3+) ions import ATP-binding protein FbpC from Haemophilus influenzae (strain 86-028NP).